A 145-amino-acid polypeptide reads, in one-letter code: 3-hydroxyacyl-[acyl-carrier-protein] dehydratase FabZ (145 aa).

Residue His51 is part of the active site.

The protein belongs to the thioester dehydratase family. FabZ subfamily.

It localises to the cytoplasm. The enzyme catalyses a (3R)-hydroxyacyl-[ACP] = a (2E)-enoyl-[ACP] + H2O. In terms of biological role, involved in unsaturated fatty acids biosynthesis. Catalyzes the dehydration of short chain beta-hydroxyacyl-ACPs and long chain saturated and unsaturated beta-hydroxyacyl-ACPs. In Staphylococcus carnosus (strain TM300), this protein is 3-hydroxyacyl-[acyl-carrier-protein] dehydratase FabZ.